The chain runs to 126 residues: Holo-[acyl-carrier-protein] synthase (126 aa).

Residues Asp-9 and Glu-58 each coordinate Mg(2+).

The protein belongs to the P-Pant transferase superfamily. AcpS family. The cofactor is Mg(2+).

Its subcellular location is the cytoplasm. It catalyses the reaction apo-[ACP] + CoA = holo-[ACP] + adenosine 3',5'-bisphosphate + H(+). Transfers the 4'-phosphopantetheine moiety from coenzyme A to a Ser of acyl-carrier-protein. The sequence is that of Holo-[acyl-carrier-protein] synthase from Vibrio parahaemolyticus serotype O3:K6 (strain RIMD 2210633).